The chain runs to 128 residues: Large ribosomal subunit protein bL19 (128 aa).

This sequence belongs to the bacterial ribosomal protein bL19 family.

In terms of biological role, this protein is located at the 30S-50S ribosomal subunit interface and may play a role in the structure and function of the aminoacyl-tRNA binding site. In Azoarcus sp. (strain BH72), this protein is Large ribosomal subunit protein bL19.